The primary structure comprises 491 residues: Probable glycine dehydrogenase (decarboxylating) subunit 2 (491 aa).

The residue at position 273 (Lys-273) is an N6-(pyridoxal phosphate)lysine.

This sequence belongs to the GcvP family. C-terminal subunit subfamily. The glycine cleavage system is composed of four proteins: P, T, L and H. In this organism, the P 'protein' is a heterodimer of two subunits. It depends on pyridoxal 5'-phosphate as a cofactor.

The enzyme catalyses N(6)-[(R)-lipoyl]-L-lysyl-[glycine-cleavage complex H protein] + glycine + H(+) = N(6)-[(R)-S(8)-aminomethyldihydrolipoyl]-L-lysyl-[glycine-cleavage complex H protein] + CO2. In terms of biological role, the glycine cleavage system catalyzes the degradation of glycine. The P protein binds the alpha-amino group of glycine through its pyridoxal phosphate cofactor; CO(2) is released and the remaining methylamine moiety is then transferred to the lipoamide cofactor of the H protein. This Bacillus cereus (strain ATCC 10987 / NRS 248) protein is Probable glycine dehydrogenase (decarboxylating) subunit 2.